A 197-amino-acid chain; its full sequence is NADH-quinone oxidoreductase subunit C (197 aa).

It belongs to the complex I 30 kDa subunit family. As to quaternary structure, NDH-1 is composed of 14 different subunits. Subunits NuoB, C, D, E, F, and G constitute the peripheral sector of the complex.

The protein localises to the cell inner membrane. It carries out the reaction a quinone + NADH + 5 H(+)(in) = a quinol + NAD(+) + 4 H(+)(out). NDH-1 shuttles electrons from NADH, via FMN and iron-sulfur (Fe-S) centers, to quinones in the respiratory chain. The immediate electron acceptor for the enzyme in this species is believed to be ubiquinone. Couples the redox reaction to proton translocation (for every two electrons transferred, four hydrogen ions are translocated across the cytoplasmic membrane), and thus conserves the redox energy in a proton gradient. This Caulobacter vibrioides (strain ATCC 19089 / CIP 103742 / CB 15) (Caulobacter crescentus) protein is NADH-quinone oxidoreductase subunit C.